Reading from the N-terminus, the 497-residue chain is tRNA (adenine(58)-N(1))-methyltransferase non-catalytic subunit TRM6 (497 aa).

Residues 81–103 are disordered; the sequence is LEEPASETKEAGTDNRNIVDDGK. Residues 95-105 form a substrate region; it reads NRNIVDDGKSQ. Threonine 108 carries the phosphothreonine modification. Substrate regions lie at residues 146–155 and 176–183; these read KYIKKKKKKY and REPGKINH. Positions 275–354 are disordered; sequence MLSSEPKDST…EKQRRQEEQR (80 aa). Residues 289–307 show a composition bias toward acidic residues; it reads SNGELEEKEIAEQADEDNI. The segment covering 328–354 has biased composition (basic and acidic residues); sequence PENKEPKEKRSKRDYIQEKQRRQEEQR. Positions 349 and 377 each coordinate substrate. Substrate regions lie at residues 415 to 423 and 434 to 441; these read RERGGVINL and QVLPDRSH. Residues 474-497 form a disordered region; that stretch reads TGALDPHKAEEPAAKKQKCMESAS. The segment covering 478 to 487 has biased composition (basic and acidic residues); sequence DPHKAEEPAA.

Belongs to the TRM6/GCD10 family. As to quaternary structure, heterotetramer; composed of two copies of TRMT6 and two copies of TRMT61A.

The protein resides in the nucleus. In terms of biological role, substrate-binding subunit of tRNA (adenine-N(1)-)-methyltransferase, which catalyzes the formation of N(1)-methyladenine at position 58 (m1A58) in initiator methionyl-tRNA. Together with the TRMT61A catalytic subunit, part of a mRNA N(1)-methyltransferase complex that mediates methylation of adenosine residues at the N(1) position of a small subset of mRNAs: N(1) methylation takes place in tRNA T-loop-like structures of mRNAs and is only present at low stoichiometries. This Mus musculus (Mouse) protein is tRNA (adenine(58)-N(1))-methyltransferase non-catalytic subunit TRM6 (Trmt6).